We begin with the raw amino-acid sequence, 375 residues long: tRNA-specific 2-thiouridylase MnmA (375 aa).

Residues 12–19 (GMSGGVDS) and M38 contribute to the ATP site. An interaction with target base in tRNA region spans residues 98-100 (NPD). Catalysis depends on C103, which acts as the Nucleophile. A disulfide bridge connects residues C103 and C200. G127 serves as a coordination point for ATP. An interaction with tRNA region spans residues 150-152 (KDQ). Residue C200 is the Cysteine persulfide intermediate of the active site. Residues 312 to 313 (RY) are interaction with tRNA.

The protein belongs to the MnmA/TRMU family.

It is found in the cytoplasm. It carries out the reaction S-sulfanyl-L-cysteinyl-[protein] + uridine(34) in tRNA + AH2 + ATP = 2-thiouridine(34) in tRNA + L-cysteinyl-[protein] + A + AMP + diphosphate + H(+). Functionally, catalyzes the 2-thiolation of uridine at the wobble position (U34) of tRNA, leading to the formation of s(2)U34. This is tRNA-specific 2-thiouridylase MnmA from Lactobacillus johnsonii (strain CNCM I-12250 / La1 / NCC 533).